A 368-amino-acid polypeptide reads, in one-letter code: Homoserine O-acetyltransferase (368 aa).

An AB hydrolase-1 domain is found at 43–354 (NVVVVCHALT…DYGHDAFLVE (312 aa)). Residue Ser-148 is the Nucleophile of the active site. Arg-220 is a binding site for substrate. Residues Asp-314 and His-348 contribute to the active site. Asp-349 lines the substrate pocket.

This sequence belongs to the AB hydrolase superfamily. MetX family. As to quaternary structure, homodimer.

It is found in the cytoplasm. The enzyme catalyses L-homoserine + acetyl-CoA = O-acetyl-L-homoserine + CoA. It functions in the pathway amino-acid biosynthesis; L-methionine biosynthesis via de novo pathway; O-acetyl-L-homoserine from L-homoserine: step 1/1. Transfers an acetyl group from acetyl-CoA to L-homoserine, forming acetyl-L-homoserine. The polypeptide is Homoserine O-acetyltransferase (Sulfurimonas autotrophica (strain ATCC BAA-671 / DSM 16294 / JCM 11897 / OK10)).